Consider the following 471-residue polypeptide: UDP-glycosyltransferase 71A15 (471 aa).

Residues Ser282, Trp348 to Ala349, His366 to Glu374, and Tyr388 to Gln391 each bind UDP-alpha-D-glucose.

Belongs to the UDP-glycosyltransferase family.

Its function is as follows. Glycosyltransferase that possesses chalcone and flavonol 2'-O-glycosyltransferase activity. Converts phloretin to phlorizin (phloretin 2'-O-glucoside), a potent antioxidant. Possesses glycosyltransferase activity toward, naringenin, naringenin chalcone, eriodictyol, eriodictyol chalcone, apigenin, luteolin, kaempferol, quercetin, isoliquiritigenin, butein and caffeic acid. Can convert phloretin to phloretin 4'-O-glucoside and phloretin 4-O-glucoside. The protein is UDP-glycosyltransferase 71A15 of Malus domestica (Apple).